Here is a 257-residue protein sequence, read N- to C-terminus: Dihydroorotate dehydrogenase B (NAD(+)), electron transfer subunit (257 aa).

In terms of domain architecture, FAD-binding FR-type spans 2 to 100; the sequence is ILIEDLTVVS…MGPQGNGFDI (99 aa). FAD-binding positions include 51–54, 68–70, and 75–76; these read RPIS, VYR, and GT. [2Fe-2S] cluster-binding residues include C220, C225, C228, and C244.

It belongs to the PyrK family. As to quaternary structure, heterotetramer of 2 PyrK and 2 PyrD type B subunits. [2Fe-2S] cluster is required as a cofactor. The cofactor is FAD.

It functions in the pathway pyrimidine metabolism; UMP biosynthesis via de novo pathway; orotate from (S)-dihydroorotate (NAD(+) route): step 1/1. Functionally, responsible for channeling the electrons from the oxidation of dihydroorotate from the FMN redox center in the PyrD type B subunit to the ultimate electron acceptor NAD(+). This is Dihydroorotate dehydrogenase B (NAD(+)), electron transfer subunit from Streptococcus thermophilus (strain ATCC BAA-491 / LMD-9).